A 477-amino-acid chain; its full sequence is Adenylyl cyclase-associated protein 2 (477 aa).

The residue at position 2 (Ala-2) is an N-acetylalanine. Disordered regions lie at residues 225–261 (LSSGPGLPPPPPPLPPPGPPPLFENEGKKEESSPSRS) and 274–321 (TKGL…SQKH). Residues 230–246 (GLPPPPPPLPPPGPPPL) are compositionally biased toward pro residues. Low complexity predominate over residues 298–320 (QTQSPTKSHTPSPTSPKSYPSQK). A phosphoserine mark is found at Ser-301 and Ser-309. The 139-residue stretch at 317–455 (PSQKHAPVLE…QDGDYREFPI (139 aa)) folds into the C-CAP/cofactor C-like domain.

This sequence belongs to the CAP family.

Its subcellular location is the cell membrane. Involved in the regulation of actin polymerization. This chain is Adenylyl cyclase-associated protein 2 (CAP2), found in Homo sapiens (Human).